The sequence spans 116 residues: Ino eighty subunit 4 (116 aa).

The segment covering 1–15 (MSQESSVLSESQEQL) has biased composition (low complexity). Disordered stretches follow at residues 1 to 40 (MSQESSVLSESQEQLANNPKIEDTSPPSANSRDNSKPVLP) and 70 to 116 (EERQ…GLDS). The segment covering 84–108 (KGSDDKATRKKEPADEDPEVKQLEK) has biased composition (basic and acidic residues).

As to quaternary structure, component of the chromatin-remodeling INO80 complex, at least composed of ARP4, ARP5, ARP8, RVB1, RVB2, TAF14, NHP10, IES1, IES3, IES4, IES6, ACT1, IES2, IES5 and INO80.

Its subcellular location is the nucleus. The sequence is that of Ino eighty subunit 4 (IES4) from Saccharomyces cerevisiae (strain ATCC 204508 / S288c) (Baker's yeast).